A 523-amino-acid polypeptide reads, in one-letter code: 2-isopropylmalate synthase (523 aa).

The 263-residue stretch at 5 to 267 folds into the Pyruvate carboxyltransferase domain; that stretch reads VIIFDTTLRD…ETGINAKEIH (263 aa). Residues Asp-14, His-202, His-204, and Asn-238 each contribute to the Mn(2+) site. Residues 392–523 are regulatory domain; that stretch reads ELQQLVVHSD…QQNKQEFGSV (132 aa).

This sequence belongs to the alpha-IPM synthase/homocitrate synthase family. LeuA type 1 subfamily. Homodimer. It depends on Mn(2+) as a cofactor.

It is found in the cytoplasm. The enzyme catalyses 3-methyl-2-oxobutanoate + acetyl-CoA + H2O = (2S)-2-isopropylmalate + CoA + H(+). It functions in the pathway amino-acid biosynthesis; L-leucine biosynthesis; L-leucine from 3-methyl-2-oxobutanoate: step 1/4. In terms of biological role, catalyzes the condensation of the acetyl group of acetyl-CoA with 3-methyl-2-oxobutanoate (2-ketoisovalerate) to form 3-carboxy-3-hydroxy-4-methylpentanoate (2-isopropylmalate). The sequence is that of 2-isopropylmalate synthase from Shewanella halifaxensis (strain HAW-EB4).